Here is a 1396-residue protein sequence, read N- to C-terminus: Helicase ARIP4 (1396 aa).

Residues 1–103 are disordered; the sequence is MSDASISGSE…LQKPANLRRN (103 aa). Acidic residues predominate over residues 11–49; it reads PELDPEDMEEEEEDDEDDDEEEEEEEDEEDNDGDDEDDK. Residues 75-84 are compositionally biased toward polar residues; the sequence is RSTTSGQSGQ. The Helicase ATP-binding domain occupies 290–510; it reads RFSGSSGFGC…WCMVDFVRPD (221 aa). 303-310 lines the ATP pocket; that stretch reads HSMGLGKT. Positions 461–464 match the DEAH box motif; the sequence is DEGH. An LXXLL motif 1 motif is present at residues 549–553; sequence LHSLL. Residues 717–891 enclose the Helicase C-terminal domain; the sequence is KMVLLFHLIE…RVVDDLNPEV (175 aa). 2 disordered regions span residues 1117–1168 and 1194–1250; these read SGKQ…PDSP and NLGL…STMN. Polar residues-rich tracts occupy residues 1128-1148 and 1218-1238; these read QATS…RHST and DQSS…SYPN. The short motif at 1273–1277 is the LXXLL motif 2 element; sequence LPSLL. Residues 1340–1396 form a disordered region; it reads GLPTNNPASTFPGYLSSHSNYQASPGTSSRPLPSGETELGSCEEDGRDDDVVEVTGE. Residues 1355–1370 show a composition bias toward polar residues; sequence SSHSNYQASPGTSSRP. Acidic residues predominate over residues 1380–1396; that stretch reads SCEEDGRDDDVVEVTGE.

It belongs to the SNF2/RAD54 helicase family.

It localises to the nucleus. The catalysed reaction is ATP + H2O = ADP + phosphate + H(+). DNA helicase that modulates androgen receptor (AR)-dependent transactivation in a promoter-dependent manner. This chain is Helicase ARIP4 (rad54l2), found in Xenopus tropicalis (Western clawed frog).